Consider the following 74-residue polypeptide: Translation initiation factor IF-1 (74 aa).

An S1-like domain is found at 1-72; that stretch reads MGKEDVIRME…TRGRIVYRKK (72 aa).

It belongs to the IF-1 family. Component of the 30S ribosomal translation pre-initiation complex which assembles on the 30S ribosome in the order IF-2 and IF-3, IF-1 and N-formylmethionyl-tRNA(fMet); mRNA recruitment can occur at any time during PIC assembly.

It localises to the cytoplasm. Functionally, one of the essential components for the initiation of protein synthesis. Stabilizes the binding of IF-2 and IF-3 on the 30S subunit to which N-formylmethionyl-tRNA(fMet) subsequently binds. Helps modulate mRNA selection, yielding the 30S pre-initiation complex (PIC). Upon addition of the 50S ribosomal subunit IF-1, IF-2 and IF-3 are released leaving the mature 70S translation initiation complex. This Thermotoga petrophila (strain ATCC BAA-488 / DSM 13995 / JCM 10881 / RKU-1) protein is Translation initiation factor IF-1.